A 62-amino-acid chain; its full sequence is Cytochrome b-c1 complex subunit 6-2, mitochondrial (62 aa).

Disulfide bonds link Cys-17–Cys-59 and Cys-31–Cys-45.

The protein belongs to the UQCRH/QCR6 family. As to quaternary structure, component of the ubiquinol-cytochrome c oxidoreductase (cytochrome b-c1 complex, complex III, CIII), a multisubunit enzyme composed of 10 subunits. The complex is composed of 3 respiratory subunits cytochrome b (MT-CYB), cytochrome c1 (CYC1-1 or CYC1-2) and Rieske protein (UCR1-1 or UCR1-2), 2 core protein subunits MPPalpha1 (or MPPalpha2) and MPPB, and 5 low-molecular weight protein subunits QCR7-1 (or QCR7-2), UCRQ-1 (or UCRQ-2), QCR9, UCRY and probably QCR6-1 (or QCR6-2). The complex exists as an obligatory dimer and forms supercomplexes (SCs) in the inner mitochondrial membrane with NADH-ubiquinone oxidoreductase (complex I, CI), resulting in different assemblies (supercomplexes SCI(1)III(2) and SCI(2)III(4)).

The protein localises to the mitochondrion inner membrane. Its function is as follows. Component of the ubiquinol-cytochrome c oxidoreductase, a multisubunit transmembrane complex that is part of the mitochondrial electron transport chain which drives oxidative phosphorylation. The respiratory chain contains 3 multisubunit complexes succinate dehydrogenase (complex II, CII), ubiquinol-cytochrome c oxidoreductase (cytochrome b-c1 complex, complex III, CIII) and cytochrome c oxidase (complex IV, CIV), that cooperate to transfer electrons derived from NADH and succinate to molecular oxygen, creating an electrochemical gradient over the inner membrane that drives transmembrane transport and the ATP synthase. The cytochrome b-c1 complex catalyzes electron transfer from ubiquinol to cytochrome c, linking this redox reaction to translocation of protons across the mitochondrial inner membrane, with protons being carried across the membrane as hydrogens on the quinol. In the process called Q cycle, 2 protons are consumed from the matrix, 4 protons are released into the intermembrane space and 2 electrons are passed to cytochrome c. This is Cytochrome b-c1 complex subunit 6-2, mitochondrial (QCR6-2) from Arabidopsis thaliana (Mouse-ear cress).